The primary structure comprises 536 residues: CTP synthase (536 aa).

Positions 1–267 (MTKYIFVTGG…DQIVCDHLKL (267 aa)) are amidoligase domain. Ser13 contributes to the CTP binding site. Ser13 is a UTP binding site. 14-19 (SIGKGI) lines the ATP pocket. L-glutamine is bound at residue Tyr54. Asp71 is an ATP binding site. Asp71 and Glu141 together coordinate Mg(2+). Residues 148-150 (DIE), 188-193 (KTKPTQ), and Lys224 each bind CTP. UTP is bound by residues 188-193 (KTKPTQ) and Lys224. Residues 292 to 535 (KIALVGKYVE…ITAAVENSQA (244 aa)) form the Glutamine amidotransferase type-1 domain. L-glutamine is bound at residue Gly354. Cys381 functions as the Nucleophile; for glutamine hydrolysis in the catalytic mechanism. Residues 382–385 (LGMQ), Glu405, and Arg463 contribute to the L-glutamine site. Residues His508 and Glu510 contribute to the active site.

It belongs to the CTP synthase family. Homotetramer.

The catalysed reaction is UTP + L-glutamine + ATP + H2O = CTP + L-glutamate + ADP + phosphate + 2 H(+). It carries out the reaction L-glutamine + H2O = L-glutamate + NH4(+). The enzyme catalyses UTP + NH4(+) + ATP = CTP + ADP + phosphate + 2 H(+). The protein operates within pyrimidine metabolism; CTP biosynthesis via de novo pathway; CTP from UDP: step 2/2. Allosterically activated by GTP, when glutamine is the substrate; GTP has no effect on the reaction when ammonia is the substrate. The allosteric effector GTP functions by stabilizing the protein conformation that binds the tetrahedral intermediate(s) formed during glutamine hydrolysis. Inhibited by the product CTP, via allosteric rather than competitive inhibition. Functionally, catalyzes the ATP-dependent amination of UTP to CTP with either L-glutamine or ammonia as the source of nitrogen. Regulates intracellular CTP levels through interactions with the four ribonucleotide triphosphates. The chain is CTP synthase from Streptococcus mutans serotype c (strain ATCC 700610 / UA159).